The primary structure comprises 197 residues: Imidazoleglycerol-phosphate dehydratase (197 aa).

Belongs to the imidazoleglycerol-phosphate dehydratase family.

The protein localises to the cytoplasm. The catalysed reaction is D-erythro-1-(imidazol-4-yl)glycerol 3-phosphate = 3-(imidazol-4-yl)-2-oxopropyl phosphate + H2O. It functions in the pathway amino-acid biosynthesis; L-histidine biosynthesis; L-histidine from 5-phospho-alpha-D-ribose 1-diphosphate: step 6/9. The protein is Imidazoleglycerol-phosphate dehydratase of Novosphingobium aromaticivorans (strain ATCC 700278 / DSM 12444 / CCUG 56034 / CIP 105152 / NBRC 16084 / F199).